The sequence spans 235 residues: Large ribosomal subunit protein uL1 (235 aa).

This sequence belongs to the universal ribosomal protein uL1 family. In terms of assembly, part of the 50S ribosomal subunit.

Functionally, binds directly to 23S rRNA. The L1 stalk is quite mobile in the ribosome, and is involved in E site tRNA release. In terms of biological role, protein L1 is also a translational repressor protein, it controls the translation of the L11 operon by binding to its mRNA. This chain is Large ribosomal subunit protein uL1, found in Prochlorococcus marinus (strain MIT 9215).